A 320-amino-acid chain; its full sequence is Methylenetetrahydrofolate dehydrogenase [NAD(+)] (320 aa).

Cys150 is an active-site residue. Residues 185–186 (RS), 208–209 (DV), and 274–276 (FAC) each bind NAD(+).

This sequence belongs to the tetrahydrofolate dehydrogenase/cyclohydrolase family. In terms of assembly, homodimer. Post-translationally, the N-terminus is blocked.

It localises to the cytoplasm. The protein localises to the nucleus. The catalysed reaction is (6R)-5,10-methylene-5,6,7,8-tetrahydrofolate + NAD(+) = (6R)-5,10-methenyltetrahydrofolate + NADH. Functionally, catalyzes oxidation of cytoplasmic one-carbon units for purine biosynthesis. The polypeptide is Methylenetetrahydrofolate dehydrogenase [NAD(+)] (MTD1) (Saccharomyces cerevisiae (strain ATCC 204508 / S288c) (Baker's yeast)).